The following is a 480-amino-acid chain: F-box only protein 3 (480 aa).

One can recognise an F-box domain in the interval Leu-10–His-56. In terms of domain architecture, ApaG spans Val-278–Val-408. The segment covering Glu-419 to Gly-459 has biased composition (acidic residues). The disordered stretch occupies residues Glu-419 to Arg-464.

In terms of assembly, part of a SCF (SKP1-cullin-F-box) protein ligase complex SCF(FBXO3) consisting of FBXO3, SKP1, CUL1 and RBX1. Interacts with PML, interaction is direct and takes place either alone or within the SCF complex.

It is found in the nucleus. Its pathway is protein modification; protein ubiquitination. Its function is as follows. Substrate recognition component of the SCF (SKP1-CUL1-F-box protein)-type E3 ubiquitin ligase complex, SCF(FBXO3), which mediates the ubiquitination and subsequent proteasomal degradation of target proteins. Mediates the ubiquitination of HIPK2 and probably that of EP300, leading to rapid degradation by the proteasome. In the presence of PML, HIPK2 ubiquitination still occurs, but degradation is prevented. PML, HIPK2 and FBXO3 may act synergically to activate p53/TP53-dependent transactivation. The SCF(FBXO3) also acts as a regulator of inflammation by mediating ubiquitination and degradation of FBXL2 in response to lipopolysaccharide (LPS). The SCF(FBXO3) complex specifically recognizes FBXL2 phosphorylated at 'Thr-404' and promotes its ubiquitination. This Rattus norvegicus (Rat) protein is F-box only protein 3 (Fbxo3).